We begin with the raw amino-acid sequence, 195 residues long: uncharacterized protein (195 aa).

An HTH tetR-type domain is found at 6–66; the sequence is VESRKRLLKA…ELITDFHSRV (61 aa). Positions 29 to 48 form a DNA-binding region, H-T-H motif; it reads KVSEIVKKAGFTQPSFYLYF.

This is an uncharacterized protein from Bacillus subtilis (strain 168).